The chain runs to 325 residues: 4-hydroxy-3-methylbut-2-enyl diphosphate reductase (325 aa).

Cys25 contributes to the [4Fe-4S] cluster binding site. Residues His54 and His87 each coordinate (2E)-4-hydroxy-3-methylbut-2-enyl diphosphate. Residues His54 and His87 each contribute to the dimethylallyl diphosphate site. Positions 54 and 87 each coordinate isopentenyl diphosphate. [4Fe-4S] cluster is bound at residue Cys109. His137 provides a ligand contact to (2E)-4-hydroxy-3-methylbut-2-enyl diphosphate. Dimethylallyl diphosphate is bound at residue His137. His137 contributes to the isopentenyl diphosphate binding site. The active-site Proton donor is Glu139. Thr179 is a (2E)-4-hydroxy-3-methylbut-2-enyl diphosphate binding site. Position 209 (Cys209) interacts with [4Fe-4S] cluster. (2E)-4-hydroxy-3-methylbut-2-enyl diphosphate-binding residues include Ser237, Ser238, Asn239, and Ser282. 4 residues coordinate dimethylallyl diphosphate: Ser237, Ser238, Asn239, and Ser282. Isopentenyl diphosphate-binding residues include Ser237, Ser238, Asn239, and Ser282.

It belongs to the IspH family. Requires [4Fe-4S] cluster as cofactor.

The enzyme catalyses isopentenyl diphosphate + 2 oxidized [2Fe-2S]-[ferredoxin] + H2O = (2E)-4-hydroxy-3-methylbut-2-enyl diphosphate + 2 reduced [2Fe-2S]-[ferredoxin] + 2 H(+). It carries out the reaction dimethylallyl diphosphate + 2 oxidized [2Fe-2S]-[ferredoxin] + H2O = (2E)-4-hydroxy-3-methylbut-2-enyl diphosphate + 2 reduced [2Fe-2S]-[ferredoxin] + 2 H(+). It functions in the pathway isoprenoid biosynthesis; dimethylallyl diphosphate biosynthesis; dimethylallyl diphosphate from (2E)-4-hydroxy-3-methylbutenyl diphosphate: step 1/1. Its pathway is isoprenoid biosynthesis; isopentenyl diphosphate biosynthesis via DXP pathway; isopentenyl diphosphate from 1-deoxy-D-xylulose 5-phosphate: step 6/6. Its function is as follows. Catalyzes the conversion of 1-hydroxy-2-methyl-2-(E)-butenyl 4-diphosphate (HMBPP) into a mixture of isopentenyl diphosphate (IPP) and dimethylallyl diphosphate (DMAPP). Acts in the terminal step of the DOXP/MEP pathway for isoprenoid precursor biosynthesis. The polypeptide is 4-hydroxy-3-methylbut-2-enyl diphosphate reductase (Corynebacterium glutamicum (strain ATCC 13032 / DSM 20300 / JCM 1318 / BCRC 11384 / CCUG 27702 / LMG 3730 / NBRC 12168 / NCIMB 10025 / NRRL B-2784 / 534)).